The chain runs to 294 residues: Phosphate acetyltransferase (294 aa).

The protein belongs to the phosphate acetyltransferase and butyryltransferase family. Homotetramer.

The protein localises to the cytoplasm. The catalysed reaction is acetyl-CoA + phosphate = acetyl phosphate + CoA. It functions in the pathway metabolic intermediate biosynthesis; acetyl-CoA biosynthesis; acetyl-CoA from acetate: step 2/2. In terms of biological role, in addition to acetyl-CoA (100%), the enzyme accepts propionyl-CoA (60%) and butyryl-CoA (30%). This Thermotoga maritima (strain ATCC 43589 / DSM 3109 / JCM 10099 / NBRC 100826 / MSB8) protein is Phosphate acetyltransferase (pta).